The primary structure comprises 397 residues: Cysteine desulfurase IscS (397 aa).

Pyridoxal 5'-phosphate contacts are provided by residues 72 to 73, Asn152, Gln180, and 200 to 202; these read GS and SAH. Lys203 carries the N6-(pyridoxal phosphate)lysine modification. Thr238 is a pyridoxal 5'-phosphate binding site. Residue Cys328 is the Cysteine persulfide intermediate of the active site. Cys328 provides a ligand contact to [2Fe-2S] cluster.

The protein belongs to the class-V pyridoxal-phosphate-dependent aminotransferase family. NifS/IscS subfamily. In terms of assembly, homodimer. Forms a heterotetramer with IscU, interacts with other sulfur acceptors. Pyridoxal 5'-phosphate serves as cofactor.

The protein localises to the cytoplasm. It carries out the reaction (sulfur carrier)-H + L-cysteine = (sulfur carrier)-SH + L-alanine. Its pathway is cofactor biosynthesis; iron-sulfur cluster biosynthesis. Its function is as follows. Master enzyme that delivers sulfur to a number of partners involved in Fe-S cluster assembly, tRNA modification or cofactor biosynthesis. Catalyzes the removal of elemental sulfur atoms from cysteine to produce alanine. Functions as a sulfur delivery protein for Fe-S cluster synthesis onto IscU, an Fe-S scaffold assembly protein, as well as other S acceptor proteins. In Clostridium botulinum (strain Kyoto / Type A2), this protein is Cysteine desulfurase IscS.